We begin with the raw amino-acid sequence, 89 residues long: Large ribosomal subunit protein eL31 (89 aa).

It belongs to the eukaryotic ribosomal protein eL31 family.

The sequence is that of Large ribosomal subunit protein eL31 from Picrophilus torridus (strain ATCC 700027 / DSM 9790 / JCM 10055 / NBRC 100828 / KAW 2/3).